The chain runs to 64 residues: Cold shock protein CapA (64 aa).

A CSD domain is found at 7–64; sequence GTVKWFNDEKGFGFITPQGGGDDLFVHFKAIESDGFKSLKEGQTVSFVAEKGQKGMQA.

Its subcellular location is the cytoplasm. In terms of biological role, affects cell viability at low temperatures. This is Cold shock protein CapA (capA) from Pseudomonas fragi.